The chain runs to 401 residues: Carboxybiotin decarboxylase (401 aa).

10 helical membrane-spanning segments follow: residues 20–40 (VISI…YFGF), 46–66 (PLIM…VLFL), 70–90 (VVGT…VNLM), 107–127 (LIAC…FILI), 131–151 (ASII…IIGI), 173–193 (MVLF…AIIA), 244–264 (LCLL…GIAI), 275–295 (LLET…LGAL), 306–326 (ISLI…GGVL), and 380–400 (VCGL…LFLL).

The protein resides in the cell membrane. It catalyses the reaction N(6)-carboxybiotinyl-L-lysyl-[protein] + n Na(+)(in) + H(+) = N(6)-biotinyl-L-lysyl-[protein] + n Na(+)(out) + CO2. Its function is as follows. Beta subunit of the biotin-dependent malonate decarboxylase multienzyme complex (EC 7.2.4.4). Acts as an integral membrane-bound carboxybiotin protein decarboxylase by releasing the carboxyl group of the carboxylated biotin carrier MADF. The free energy of the decarboxylation reaction is used to pump Na(+) out of the cell. This Malonomonas rubra protein is Carboxybiotin decarboxylase (madB).